The following is a 130-amino-acid chain: Small ribosomal subunit protein uS8 (130 aa).

It belongs to the universal ribosomal protein uS8 family. In terms of assembly, part of the 30S ribosomal subunit. Contacts proteins S5 and S12.

In terms of biological role, one of the primary rRNA binding proteins, it binds directly to 16S rRNA central domain where it helps coordinate assembly of the platform of the 30S subunit. In Buchnera aphidicola subsp. Schizaphis graminum (strain Sg), this protein is Small ribosomal subunit protein uS8.